The following is a 186-amino-acid chain: UPF0340 protein SEQ_1951 (186 aa).

It belongs to the UPF0340 family.

This chain is UPF0340 protein SEQ_1951, found in Streptococcus equi subsp. equi (strain 4047).